The sequence spans 601 residues: Alpha-terpineol synthase, chloroplastic (601 aa).

Residues 1–47 (MSTISIHHVGILRNPLHSKSKRASINKPWSLSLPRSSSASRLVEPCR) constitute a chloroplast transit peptide. Mn(2+)-binding residues include aspartate 357 and aspartate 361. Residues 357–361 (DDVYD) carry the DDXXD motif motif. 2 homodimerization regions span residues 363–369 (YGTLDEL) and 435–471 (EAEW…ELSL). Aspartate 499 and glutamate 507 together coordinate Mn(2+).

The protein belongs to the terpene synthase family. As to quaternary structure, homodimer. Requires Mn(2+) as cofactor. The cofactor is Mg(2+).

Its subcellular location is the plastid. It localises to the chloroplast. The catalysed reaction is (2E)-geranyl diphosphate + H2O = (S)-alpha-terpineol + diphosphate. It carries out the reaction (2E)-geranyl diphosphate + H2O = (R)-alpha-terpineol + diphosphate. The protein operates within secondary metabolite biosynthesis; terpenoid biosynthesis. Functionally, involved in the biosynthesis of phenolic monoterpenes natural products. Monoterpene synthase which catalyzes the conversion of geranyl diphosphate (GPP) to alpha-terpineol (isomer is not determined). The chain is Alpha-terpineol synthase, chloroplastic from Thymus caespititius (Cretan thyme).